The chain runs to 286 residues: Ribosome-inactivating protein beta-momorcharin (286 aa).

Positions 1-23 (MVKCLLLSFLIIAIFIGVPTAKG) are cleaved as a signal peptide. Asparagine 74 carries an N-linked (GlcNAc...) asparagine glycan. Active-site residues include tyrosine 93, tyrosine 132, glutamate 181, and arginine 184.

It belongs to the ribosome-inactivating protein family. Type 1 RIP subfamily. Bound to a branched hexasaccharide.

The catalysed reaction is Endohydrolysis of the N-glycosidic bond at one specific adenosine on the 28S rRNA.. Irreversibly relaxes supercoiled DNA and catalyzes double-stranded breakage. Also acts as a ribosome inactivating protein. The protein is Ribosome-inactivating protein beta-momorcharin (MAP30) of Momordica charantia (Bitter gourd).